Consider the following 152-residue polypeptide: Endoribonuclease YbeY (152 aa).

Residues H111, H115, and H121 each coordinate Zn(2+).

The protein belongs to the endoribonuclease YbeY family. Requires Zn(2+) as cofactor.

The protein localises to the cytoplasm. Its function is as follows. Single strand-specific metallo-endoribonuclease involved in late-stage 70S ribosome quality control and in maturation of the 3' terminus of the 16S rRNA. In Pseudomonas fluorescens (strain ATCC BAA-477 / NRRL B-23932 / Pf-5), this protein is Endoribonuclease YbeY.